A 439-amino-acid chain; its full sequence is Chromosomal replication initiator protein DnaA (439 aa).

Residues 1 to 72 (MEQFSAFKLL…SKLYDDIRAV (72 aa)) are domain I, interacts with DnaA modulators. Residues 72 to 99 (VRFVNEQDFFINLAKLEEDNRETLYQSS) are domain II. The segment at 100–322 (GLSKNFTFKN…GIATKLLFYV (223 aa)) is domain III, AAA+ region. Positions 144, 146, 147, and 148 each coordinate ATP. A domain IV, binds dsDNA region spans residues 323–439 (KTTKQNLINN…LQDIITSLVI (117 aa)).

This sequence belongs to the DnaA family. Oligomerizes as a right-handed, spiral filament on DNA at oriC.

The protein resides in the cytoplasm. Functionally, plays an essential role in the initiation and regulation of chromosomal replication. ATP-DnaA binds to the origin of replication (oriC) to initiate formation of the DNA replication initiation complex once per cell cycle. Binds the DnaA box (a 9 base pair repeat at the origin) and separates the double-stranded (ds)DNA. Forms a right-handed helical filament on oriC DNA; dsDNA binds to the exterior of the filament while single-stranded (ss)DNA is stabiized in the filament's interior. The ATP-DnaA-oriC complex binds and stabilizes one strand of the AT-rich DNA unwinding element (DUE), permitting loading of DNA polymerase. After initiation quickly degrades to an ADP-DnaA complex that is not apt for DNA replication. Binds acidic phospholipids. The chain is Chromosomal replication initiator protein DnaA from Mycoplasma pneumoniae (strain ATCC 29342 / M129 / Subtype 1) (Mycoplasmoides pneumoniae).